The sequence spans 210 residues: HTH-type transcriptional repressor FabR (210 aa).

The 61-residue stretch at 10-70 folds into the HTH tetR-type domain; that stretch reads KTRRSLVEAA…TMVDESGLML (61 aa). The segment at residues 33–52 is a DNA-binding region (H-T-H motif); sequence SLREVAREAGIAPTSFYRHF.

In terms of assembly, homodimer.

The protein localises to the cytoplasm. In terms of biological role, represses the transcription of fabB, involved in unsaturated fatty acid (UFA) biosynthesis. By controlling UFA production, FabR directly influences the physical properties of the membrane bilayer. This is HTH-type transcriptional repressor FabR from Salmonella choleraesuis (strain SC-B67).